Reading from the N-terminus, the 124-residue chain is uncharacterized protein (124 aa).

The disordered stretch occupies residues 44-92; sequence DRVENSGNGTGSISAPLTDLGPSIGDSHENKGADIPIHPPLDTQSHAKD. Positions 48–58 are enriched in polar residues; sequence NSGNGTGSISA.

This is an uncharacterized protein from Caenorhabditis elegans.